Consider the following 1079-residue polypeptide: Alpha-mannosidase C (1079 aa).

An N-terminal signal peptide occupies residues 1–22 (MFYKTFGFLFIYLIILISGTLS). Residues His-44 and Asp-46 each coordinate Zn(2+). Asn-60 and Asn-96 each carry an N-linked (GlcNAc...) asparagine glycan. Asp-158 is a Zn(2+) binding site. The active-site Nucleophile is the Asp-158. Residues Asn-192, Asn-222, Asn-248, and Asn-467 are each glycosylated (N-linked (GlcNAc...) asparagine). Zn(2+) is bound at residue His-475. 10 N-linked (GlcNAc...) asparagine glycosylation sites follow: Asn-516, Asn-527, Asn-589, Asn-760, Asn-769, Asn-848, Asn-872, Asn-912, Asn-1040, and Asn-1057.

The protein belongs to the glycosyl hydrolase 38 family. Requires Zn(2+) as cofactor.

It localises to the secreted. The catalysed reaction is Hydrolysis of terminal, non-reducing alpha-D-mannose residues in alpha-D-mannosides.. In Dictyostelium discoideum (Social amoeba), this protein is Alpha-mannosidase C (manC).